A 274-amino-acid chain; its full sequence is 3',5'-cyclic adenosine monophosphate phosphodiesterase CpdA (274 aa).

Residues D21, H23, D63, N93, H163, H202, and H204 each coordinate Fe cation. AMP-binding positions include H23, D63, and 93–94; that span reads NH. Residue H204 coordinates AMP.

The protein belongs to the cyclic nucleotide phosphodiesterase class-III family. Requires Fe(2+) as cofactor.

The catalysed reaction is 3',5'-cyclic AMP + H2O = AMP + H(+). Hydrolyzes cAMP to 5'-AMP. Plays an important regulatory role in modulating the intracellular concentration of cAMP, thereby influencing cAMP-dependent processes. This chain is 3',5'-cyclic adenosine monophosphate phosphodiesterase CpdA, found in Vibrio vulnificus (strain CMCP6).